Reading from the N-terminus, the 320-residue chain is L-lactate dehydrogenase (320 aa).

Residues Val-18, Asp-39, Arg-44, Tyr-69, and 83–84 (GA) each bind NAD(+). Substrate-binding residues include Gln-86 and Arg-92. NAD(+)-binding positions include Thr-105, 122–124 (AAN), and Ser-147. A substrate-binding site is contributed by 124–127 (NPVD). 152-155 (DSAR) lines the substrate pocket. His-179 functions as the Proton acceptor in the catalytic mechanism. Tyr-223 carries the phosphotyrosine modification. Substrate is bound at residue Thr-232.

This sequence belongs to the LDH/MDH superfamily. LDH family. As to quaternary structure, homotetramer.

The protein localises to the cytoplasm. It catalyses the reaction (S)-lactate + NAD(+) = pyruvate + NADH + H(+). Its pathway is fermentation; pyruvate fermentation to lactate; (S)-lactate from pyruvate: step 1/1. Functionally, catalyzes the conversion of lactate to pyruvate. The polypeptide is L-lactate dehydrogenase (Pediococcus pentosaceus (strain ATCC 25745 / CCUG 21536 / LMG 10740 / 183-1w)).